The chain runs to 336 residues: MNQEMNYENTEMEQPTVVFPPENAELFDFDSDDNRTSAKTPALKAIGGGIKDKNGKVIGAGLWMAHENAEICQWKKDCTDTCDYSCMDHLKGMTPHGVDTKKVDDDGNDIIIPGSVILKPRMLVIGRSPLLKISEDSGYTVGVWVKGDNRFKGPDGKKNLYACVRRYFIIFLDEANKPLHDISQPIQLTARGYFQMEFDKMLMFFRSTMIKAYCEAMKKNATNMKEAWHSMCVFAPLFKSEMKGPSKDKQSKACITYGFDKPTKDNWLTMCVGRNKEAQDIYKIHVENKEWWQKSIKKDLQKSEEEEHPNDDHVYMTEEDDMEKIERGIESLGNGH.

Basic and acidic residues predominate over residues 297-316 (KKDLQKSEEEEHPNDDHVYM). The segment at 297–336 (KKDLQKSEEEEHPNDDHVYMTEEDDMEKIERGIESLGNGH) is disordered.

This is an uncharacterized protein from Invertebrate iridescent virus 6 (IIV-6).